Reading from the N-terminus, the 477-residue chain is MNFETVIGLEVHVELKTNSKIFSPAPAHFGEDPNANTNIIDWSFPGVLPVMNKGVIDYGIKAALALNMDIHQKMHFDRKNYFYPDNPKAYQISQFDEPIGYNGWIEIELEDGTTKKIRIERAHLEEDAGKNTHGSDGYSYVDLNRQGVPLIEIVSEADMRSPEEAYAYLTALKEIIQYTGISDVKMEEGSMRVDANISIRPYGQEEFGTKTELKNLNSFNFVRKGLAFEEKRQAEILRSGGQIRQETRRYDEATGETLLMRVKEGSADYRYFPEPDLPIFEIEDAWIEQVRNSLPAFPKERRAKYVGDYGLSDYDAKQLTATKAVSDFFEAALAAGGDAKAVSNWLQGDVAQYLNAEGKTISEIELTPENLTEMIALIADGTISSKIAKKVFVHLAKNGGSAKEYVQKAGLIQISDPAQLLPIIQQVFADNEKAINDYKGGNKNAAKSLIGQLMKATKGQANPQVAQKLLNEELEKL.

This sequence belongs to the GatB/GatE family. GatB subfamily. Heterotrimer of A, B and C subunits.

The catalysed reaction is L-glutamyl-tRNA(Gln) + L-glutamine + ATP + H2O = L-glutaminyl-tRNA(Gln) + L-glutamate + ADP + phosphate + H(+). It carries out the reaction L-aspartyl-tRNA(Asn) + L-glutamine + ATP + H2O = L-asparaginyl-tRNA(Asn) + L-glutamate + ADP + phosphate + 2 H(+). In terms of biological role, allows the formation of correctly charged Asn-tRNA(Asn) or Gln-tRNA(Gln) through the transamidation of misacylated Asp-tRNA(Asn) or Glu-tRNA(Gln) in organisms which lack either or both of asparaginyl-tRNA or glutaminyl-tRNA synthetases. The reaction takes place in the presence of glutamine and ATP through an activated phospho-Asp-tRNA(Asn) or phospho-Glu-tRNA(Gln). This Streptococcus gordonii (strain Challis / ATCC 35105 / BCRC 15272 / CH1 / DL1 / V288) protein is Aspartyl/glutamyl-tRNA(Asn/Gln) amidotransferase subunit B.